An 809-amino-acid chain; its full sequence is Leucine--tRNA ligase (809 aa).

Positions Pro-40–His-50 match the 'HIGH' region motif. The 'KMSKS' region motif lies at Lys-579–Ser-583. Lys-582 serves as a coordination point for ATP.

It belongs to the class-I aminoacyl-tRNA synthetase family.

The protein resides in the cytoplasm. It catalyses the reaction tRNA(Leu) + L-leucine + ATP = L-leucyl-tRNA(Leu) + AMP + diphosphate. The protein is Leucine--tRNA ligase of Campylobacter jejuni subsp. jejuni serotype O:23/36 (strain 81-176).